A 543-amino-acid polypeptide reads, in one-letter code: Transmembrane protease serine 13 (543 aa).

2 disordered regions span residues 1–96 and 109–129; these read MDRG…TRVY and RASP…PGLS. The Cytoplasmic portion of the chain corresponds to 1–143; sequence MDRGSHRNSS…SWQETQRQLP (143 aa). 2 tandem repeats follow at residues 14-17 and 18-22. Residues 14–49 are 4 X 4 AA repeats of T-P-P-Q; it reads TPPQASPARTSPARAPPQASPARTPPQASPARTPPQ. The segment at 18–69 is 8 X 5 AA repeats of A-S-P-A-R; that stretch reads ASPARTSPARAPPQASPARTPPQASPARTPPQASPARAPPPQASPARASPAR. One copy of the 2-2; approximate repeat lies at 23–27; the sequence is TSPAR. The segment covering 27 to 60 has biased composition (pro residues); sequence RAPPQASPARTPPQASPARTPPQASPARAPPPQA. Residues 28–31 form a 1-2; approximate repeat; that stretch reads APPQ. 5 repeat units span residues 32–36, 37–40, 41–45, 46–49, and 50–54. One copy of the 2-6; approximate repeat lies at 55-59; it reads APPPQ. A run of 2 repeats spans residues 60–64 and 65–69. Low complexity-rich tracts occupy residues 61–94 and 109–120; these read SPAR…SPTR and RASPARSAPATR. A helical; Signal-anchor for type II membrane protein membrane pass occupies residues 144 to 164; that stretch reads LIGCVILLISLVISLILLFYF. The Extracellular portion of the chain corresponds to 165–543; that stretch reads WRGHTGIKYK…MESEVRFRKS (379 aa). The LDL-receptor class A domain occupies 180–202; sequence CPIHAVRCDGVVDCKMKSDELGC. The SRCR domain occupies 199–301; sequence ELGCVRFDWD…HCGLRAMTGR (103 aa). 3 cysteine pairs are disulfide-bonded: C226-C290, C239-C293, and C327-C343. N231 and N268 each carry an N-linked (GlcNAc...) asparagine glycan. Residues 302 to 535 enclose the Peptidase S1 domain; the sequence is IVGGALTSES…VLPWIYRKME (234 aa). H342 functions as the Charge relay system in the catalytic mechanism. A glycan (N-linked (GlcNAc...) asparagine) is linked at N381. The Charge relay system role is filled by D390. An N-linked (GlcNAc...) asparagine glycan is attached at N421. Intrachain disulfides connect C424–C493, C456–C472, and C483–C511. The active-site Charge relay system is the S487.

It belongs to the peptidase S1 family. In terms of assembly, interacts with SPINT1/HAI-1; the interaction promotes the phosphorylation and cell membrane localization of TMPRSS13. Interacts with SPINT2/HAI-2; the interaction promotes the phosphorylation and cell membrane localization of TMPRSS13. In terms of processing, the inactive zymogen is post-translationally modified and then trafficked to the cell surface, whereby it undergoes autocatalytic cleavage resulting in an activated form that is released extracellularly. Phosphorylation is required for localization at the cell surface. Phosphorylation increases following inhibition of protease activity by SPINT2/HAI-2. Expressed in the suprabasal squamous epithelium of the epidermis, hair follicles, oral epithelium, cornea, upper digestive tract, transitional epithelium of the bladder, prostate, heart, intestine, kidney and thymus.

The protein localises to the cell membrane. It is found in the secreted. Its subcellular location is the cytoplasm. Cleavage of HGF is inhibited by SPINT1/HAI-1 via the BPTI/Kunitz inhibitor 1 domain. Functionally, serine protease. Cleaves the proform of PRSS8/prostasin to form the active protein. Cleaves the proform of HGF to form the active protein which promotes MAPK signaling. Promotes the formation of the stratum corneum and subsequently the epidermal barrier in embryos. This Mus musculus (Mouse) protein is Transmembrane protease serine 13 (Tmprss13).